The following is a 109-amino-acid chain: Death-associated protein-like 1 homolog (109 aa).

Disordered regions lie at residues 1 to 51 (MVQL…KPRS) and 76 to 100 (FPET…ISRI). Residues 31–50 (KSADENANVEKETRKTDKPR) are compositionally biased toward basic and acidic residues.

Belongs to the DAP-DAPL1 family. In terms of assembly, associates with ribosomes; preventing translation. Interacts with eiF5a (eif5a and eif5a2); preventing translation.

Ribosome-binding protein that promotes ribosome hibernation, a process during which ribosomes are stabilized in an inactive state and preserved from proteasomal degradation. Acts via its association with eiF5a (eif5a and eif5a2) at the polypeptide exit tunnel of the ribosome, preventing mRNA translation. Plays a key role in ribosome hibernation in the mature egg by preventing mRNA translation, leading to ribosome inactivation. Ribosomes, which are produced in large quantities during oogenesis, are stored and translationally repressed in the egg and early embryo. The polypeptide is Death-associated protein-like 1 homolog (Danio rerio (Zebrafish)).